A 158-amino-acid polypeptide reads, in one-letter code: NAD(P)H-quinone oxidoreductase subunit J, chloroplastic (158 aa).

This sequence belongs to the complex I 30 kDa subunit family. As to quaternary structure, NDH is composed of at least 16 different subunits, 5 of which are encoded in the nucleus.

The protein resides in the plastid. The protein localises to the chloroplast thylakoid membrane. The enzyme catalyses a plastoquinone + NADH + (n+1) H(+)(in) = a plastoquinol + NAD(+) + n H(+)(out). The catalysed reaction is a plastoquinone + NADPH + (n+1) H(+)(in) = a plastoquinol + NADP(+) + n H(+)(out). In terms of biological role, NDH shuttles electrons from NAD(P)H:plastoquinone, via FMN and iron-sulfur (Fe-S) centers, to quinones in the photosynthetic chain and possibly in a chloroplast respiratory chain. The immediate electron acceptor for the enzyme in this species is believed to be plastoquinone. Couples the redox reaction to proton translocation, and thus conserves the redox energy in a proton gradient. The sequence is that of NAD(P)H-quinone oxidoreductase subunit J, chloroplastic from Fagopyrum esculentum subsp. ancestrale (Wild buckwheat).